The following is a 238-amino-acid chain: Probable septum site-determining protein MinC (238 aa).

Belongs to the MinC family. As to quaternary structure, interacts with MinD and FtsZ.

Cell division inhibitor that blocks the formation of polar Z ring septums. Rapidly oscillates between the poles of the cell to destabilize FtsZ filaments that have formed before they mature into polar Z rings. Prevents FtsZ polymerization. This Xylella fastidiosa (strain M12) protein is Probable septum site-determining protein MinC.